A 162-amino-acid chain; its full sequence is Endoribonuclease YbeY (162 aa).

Residues His-117, His-121, and His-127 each contribute to the Zn(2+) site.

It belongs to the endoribonuclease YbeY family. It depends on Zn(2+) as a cofactor.

The protein localises to the cytoplasm. In terms of biological role, single strand-specific metallo-endoribonuclease involved in late-stage 70S ribosome quality control and in maturation of the 3' terminus of the 16S rRNA. The chain is Endoribonuclease YbeY from Francisella tularensis subsp. novicida (strain U112).